We begin with the raw amino-acid sequence, 346 residues long: UDP-N-acetylenolpyruvoylglucosamine reductase (346 aa).

Positions 23–194 constitute an FAD-binding PCMH-type domain; that stretch reads FDVRARLACR…VSVTFRLPKV (172 aa). The active site involves R170. The Proton donor role is filled by S246. The active site involves E342.

The protein belongs to the MurB family. The cofactor is FAD.

The protein localises to the cytoplasm. The catalysed reaction is UDP-N-acetyl-alpha-D-muramate + NADP(+) = UDP-N-acetyl-3-O-(1-carboxyvinyl)-alpha-D-glucosamine + NADPH + H(+). It functions in the pathway cell wall biogenesis; peptidoglycan biosynthesis. Its function is as follows. Cell wall formation. The protein is UDP-N-acetylenolpyruvoylglucosamine reductase of Paraburkholderia phymatum (strain DSM 17167 / CIP 108236 / LMG 21445 / STM815) (Burkholderia phymatum).